Here is a 202-residue protein sequence, read N- to C-terminus: Glycerol-3-phosphate acyltransferase (202 aa).

6 helical membrane passes run 3-23 (NLII…LILA), 61-81 (IATI…LKFL), 87-107 (LLWS…YLLF), 118-138 (GAMI…WVVI), 144-164 (ISSL…FIFN), and 167-187 (LEIH…YKHL).

The protein belongs to the PlsY family. As to quaternary structure, probably interacts with PlsX.

The protein resides in the cell inner membrane. It catalyses the reaction an acyl phosphate + sn-glycerol 3-phosphate = a 1-acyl-sn-glycero-3-phosphate + phosphate. It participates in lipid metabolism; phospholipid metabolism. Catalyzes the transfer of an acyl group from acyl-phosphate (acyl-PO(4)) to glycerol-3-phosphate (G3P) to form lysophosphatidic acid (LPA). This enzyme utilizes acyl-phosphate as fatty acyl donor, but not acyl-CoA or acyl-ACP. This Campylobacter jejuni subsp. jejuni serotype O:23/36 (strain 81-176) protein is Glycerol-3-phosphate acyltransferase.